Consider the following 810-residue polypeptide: Sister chromatid cohesion 1 protein 2 (810 aa).

Disordered stretches follow at residues 200 to 244, 273 to 315, and 606 to 626; these read RDTT…LLEP, SHES…SECG, and MGASSTTSGTAHQTENAAETP. Basic and acidic residues-rich tracts occupy residues 220–234 and 273–310; these read EPSRDHQNASRHRED and SHESSGDNLHRDGHTENLESEKTSKKTSCEEMQHDRSL. Polar residues predominate over residues 606–622; it reads MGASSTTSGTAHQTENA.

The protein belongs to the rad21 family. Component of the cohesin complex. In terms of tissue distribution, low expression in shoots, buds, siliques, leaves and roots. Found in, but not limited to, actively dividing cells: in procambium, protoderm and ground meristem in roots, and in shoot and floral meristems.

It is found in the nucleus. Functionally, may be involved in sister chromatid cohesion during mitosis. In Arabidopsis thaliana (Mouse-ear cress), this protein is Sister chromatid cohesion 1 protein 2 (SYN2).